The chain runs to 499 residues: E3 ubiquitin-protein ligase TRIM69 (499 aa).

Residues 1 to 152 (MEVSSRPPSN…SMGQSKDFLQ (152 aa)) are necessary for nuclear localization. Residues 41 to 82 (CPLCNDWFRDPLMLTCGHNFCQACIQNYWKMQAKETFCPECK) form an RING-type zinc finger. Residues 160 to 265 (FTEELAIYQS…NIQARMEQQN (106 aa)) adopt a coiled-coil conformation. Residues 305–499 (PIQYTIWREM…KEPLHIVHPQ (195 aa)) form the B30.2/SPRY domain. The residue at position 341 (S341) is a Phosphoserine.

Belongs to the TRIM/RBCC family. As to quaternary structure, homo-multimer; required for antiviral activity. Interacts with PML. Post-translationally, phosphorylated. Phosphorylation is necessary for nuclear localization.

The protein localises to the cytoplasm. The protein resides in the nucleus. It localises to the nucleus speckle. It is found in the cytoskeleton. Its subcellular location is the microtubule organizing center. The protein localises to the centrosome. It carries out the reaction S-ubiquitinyl-[E2 ubiquitin-conjugating enzyme]-L-cysteine + [acceptor protein]-L-lysine = [E2 ubiquitin-conjugating enzyme]-L-cysteine + N(6)-ubiquitinyl-[acceptor protein]-L-lysine.. The protein operates within protein modification; protein ubiquitination. E3 ubiquitin ligase that plays an important role in antiviral immunity by restricting different viral infections including dengue virus or vesicular stomatitis indiana virus. Ubiquitinates viral proteins such as dengue virus NS3 thereby limiting infection. In addition, acts as a key mediator of type I interferon induced microtubule stabilization by directly associating to microtubules independently of its E3 ligase activity. Also plays a role in cataract formation together with TP53. Mechanistically, inhibits UVB-induced cell apoptosis and reactive oxygen species (ROS) production by inducing TP53 ubiquitination. Regulates centrosome dynamics and mitotic progression by ubiquitinating STK3/MST2; leading to its redistribution to the perinuclear cytoskeleton and subsequent phosphorylation by PLK1. The chain is E3 ubiquitin-protein ligase TRIM69 (Trim69) from Rattus norvegicus (Rat).